The primary structure comprises 353 residues: Quinolinate synthase (353 aa).

Residues histidine 47 and serine 68 each contribute to the iminosuccinate site. A [4Fe-4S] cluster-binding site is contributed by cysteine 113. Residues 139-141 (YAN) and serine 156 each bind iminosuccinate. Cysteine 200 contributes to the [4Fe-4S] cluster binding site. Residues 226-228 (HPE) and threonine 243 each bind iminosuccinate. Residue cysteine 297 coordinates [4Fe-4S] cluster.

It belongs to the quinolinate synthase family. Type 1 subfamily. It depends on [4Fe-4S] cluster as a cofactor.

It is found in the cytoplasm. The catalysed reaction is iminosuccinate + dihydroxyacetone phosphate = quinolinate + phosphate + 2 H2O + H(+). Its pathway is cofactor biosynthesis; NAD(+) biosynthesis; quinolinate from iminoaspartate: step 1/1. Catalyzes the condensation of iminoaspartate with dihydroxyacetone phosphate to form quinolinate. This chain is Quinolinate synthase, found in Yersinia pestis bv. Antiqua (strain Antiqua).